A 53-amino-acid chain; its full sequence is UPF0391 membrane protein SG0393 (53 aa).

2 helical membrane passes run 4-24 and 27-47; these read WGII…GGLA and AAWA…ISLF.

It belongs to the UPF0391 family.

It localises to the cell membrane. The protein is UPF0391 membrane protein SG0393 of Sodalis glossinidius (strain morsitans).